Reading from the N-terminus, the 470-residue chain is Low molecular weight neuronal intermediate filament (470 aa).

The head stretch occupies residues 1 to 91 (MTSRELYTSS…KIVRTNEKEQ (91 aa)). An IF rod domain is found at 88 to 399 (EKEQLQGLND…KLLEGEETRL (312 aa)). Positions 91-123 (QLQGLNDRFVTYIEKVHHLEQQNKLLESEVTLL) are coil 1A. A linker 1 region spans residues 121–136 (TLLRQKHSEPSRLSHI). Positions 137 to 232 (YEQEIRELRS…KVHEEEIAEL (96 aa)) are coil 1B. Residues 233–251 (QASVQEAQISVEMDVVSKP) form a linker 12 region. Residues 252–270 (DLTAALKEIRMQYEVLSAR) form a coil 2A region. Residues 271–279 (NQQSSEEWY) form a linker 2 region. Residues 280–395 (QAKIANVSLE…AAYRKLLEGE (116 aa)) form a coil 2B region. The interval 396 to 470 (ETRLTSVGGG…EKISQKAAAN (75 aa)) is tail. Residues 414 to 431 (FSSGSYSGGRSSTTSTIS) show a composition bias toward low complexity. Positions 414-470 (FSSGSYSGGRSSTTSTISIRKEEKKESPEGGKGGSSGQPKTSKPGDQEKISQKAAAN) are disordered. Over residues 432-442 (IRKEEKKESPE) the composition is skewed to basic and acidic residues.

The protein belongs to the intermediate filament family. Nervous system; in axons in the PNS and in small perikarya in the dorsal root ganglion.

The chain is Low molecular weight neuronal intermediate filament from Xenopus laevis (African clawed frog).